We begin with the raw amino-acid sequence, 215 residues long: Ribosomal RNA small subunit methyltransferase G (215 aa).

S-adenosyl-L-methionine contacts are provided by residues G77, F82, 130–131 (IE), and R146.

Belongs to the methyltransferase superfamily. RNA methyltransferase RsmG family.

The protein resides in the cytoplasm. It carries out the reaction guanosine(527) in 16S rRNA + S-adenosyl-L-methionine = N(7)-methylguanosine(527) in 16S rRNA + S-adenosyl-L-homocysteine. Its function is as follows. Specifically methylates the N7 position of guanine in position 527 of 16S rRNA. This Bartonella henselae (strain ATCC 49882 / DSM 28221 / CCUG 30454 / Houston 1) (Rochalimaea henselae) protein is Ribosomal RNA small subunit methyltransferase G.